The sequence spans 410 residues: Phosphoglycerate kinase (410 aa).

Substrate is bound by residues aspartate 24–asparagine 26, arginine 40, histidine 63–arginine 66, arginine 122, and arginine 162. ATP-binding positions include lysine 212, glycine 300, glutamate 331, and glycine 360–serine 363.

The protein belongs to the phosphoglycerate kinase family. As to quaternary structure, monomer.

It localises to the cytoplasm. The enzyme catalyses (2R)-3-phosphoglycerate + ATP = (2R)-3-phospho-glyceroyl phosphate + ADP. The protein operates within carbohydrate degradation; glycolysis; pyruvate from D-glyceraldehyde 3-phosphate: step 2/5. In Nocardia farcinica (strain IFM 10152), this protein is Phosphoglycerate kinase.